Reading from the N-terminus, the 437-residue chain is Epsilon-sarcoglycan (437 aa).

Residues 1 to 317 (MLLFWWWELG…LKSRDYYTDF (317 aa)) are Extracellular-facing. A glycan (N-linked (GlcNAc...) asparagine) is linked at asparagine 200. Residues 318–338 (LVTLAVPSAVALVLFLILAYI) traverse the membrane as a helical segment. The Cytoplasmic portion of the chain corresponds to 339–437 (MCCRREGVEK…QQQTTGKWYP (99 aa)).

This sequence belongs to the sarcoglycan alpha/epsilon family. In terms of processing, N-glycosylated. Ubiquitinated, leading to its degradation by the proteasome. In both neural tissues including cerebellar cortex, striatum, cerebral cortex, thalamus and hippocampus, and non-neural tissues including quadriceps muscle, liver, kidney, spleen, lung, testis and heart. Widely distributed in the brain, with a robust signal obtained from regions with dense neuronal packing such as the pyramidal cell layer of the hippocampus, cerebellar molecular layer, and cerebral cortex. Levels are highest in kidney, moderate in brain and lung, and low in skeletal muscle, liver, spleen and testis.

It localises to the cell membrane. It is found in the sarcolemma. Its subcellular location is the cytoplasm. The protein resides in the cytoskeleton. The protein localises to the cell projection. It localises to the dendrite. It is found in the golgi apparatus. Functionally, component of the sarcoglycan complex, a subcomplex of the dystrophin-glycoprotein complex which forms a link between the F-actin cytoskeleton and the extracellular matrix. The chain is Epsilon-sarcoglycan from Rattus norvegicus (Rat).